Reading from the N-terminus, the 1127-residue chain is Carbamoyl phosphate synthase large chain (1127 aa).

Residues 1–402 form a carboxyphosphate synthetic domain region; the sequence is MPKRTDIKSV…SLGKAMRSID (402 aa). Positions 129, 169, 175, 176, 208, 210, 215, 241, 242, 243, 285, and 299 each coordinate ATP. The region spanning 133 to 328 is the ATP-grasp 1 domain; it reads KKVVDEAGAE…IAKIATKLAL (196 aa). Residues glutamine 285, glutamate 299, and asparagine 301 each coordinate Mg(2+). The Mn(2+) site is built by glutamine 285, glutamate 299, and asparagine 301. An oligomerization domain region spans residues 403–551; the sequence is KRHMGFNWDG…YYYSCYADET (149 aa). The interval 552–962 is carbamoyl phosphate synthetic domain; the sequence is ELRPREREAV…AFAKSQLAAY (411 aa). In terms of domain architecture, ATP-grasp 2 spans 681–881; it reads GEVLKKAEMN…LAKAAARIMA (201 aa). ATP is bound by residues arginine 717, lysine 765, leucine 767, glutamate 772, glycine 797, valine 798, histidine 799, serine 800, glutamine 840, and glutamate 852. Mg(2+) contacts are provided by glutamine 840, glutamate 852, and asparagine 854. Mn(2+) is bound by residues glutamine 840, glutamate 852, and asparagine 854. The interval 963–1127 is allosteric domain; it reads DGGLPTHGNV…QLFELERREF (165 aa). In terms of domain architecture, MGS-like spans 964-1127; sequence GGLPTHGNVF…QLFELERREF (164 aa).

It belongs to the CarB family. Composed of two chains; the small (or glutamine) chain promotes the hydrolysis of glutamine to ammonia, which is used by the large (or ammonia) chain to synthesize carbamoyl phosphate. Tetramer of heterodimers (alpha,beta)4. Mg(2+) serves as cofactor. The cofactor is Mn(2+).

It carries out the reaction hydrogencarbonate + L-glutamine + 2 ATP + H2O = carbamoyl phosphate + L-glutamate + 2 ADP + phosphate + 2 H(+). The enzyme catalyses hydrogencarbonate + NH4(+) + 2 ATP = carbamoyl phosphate + 2 ADP + phosphate + 2 H(+). Its pathway is amino-acid biosynthesis; L-arginine biosynthesis; carbamoyl phosphate from bicarbonate: step 1/1. It participates in pyrimidine metabolism; UMP biosynthesis via de novo pathway; (S)-dihydroorotate from bicarbonate: step 1/3. Functionally, large subunit of the glutamine-dependent carbamoyl phosphate synthetase (CPSase). CPSase catalyzes the formation of carbamoyl phosphate from the ammonia moiety of glutamine, carbonate, and phosphate donated by ATP, constituting the first step of 2 biosynthetic pathways, one leading to arginine and/or urea and the other to pyrimidine nucleotides. The large subunit (synthetase) binds the substrates ammonia (free or transferred from glutamine from the small subunit), hydrogencarbonate and ATP and carries out an ATP-coupled ligase reaction, activating hydrogencarbonate by forming carboxy phosphate which reacts with ammonia to form carbamoyl phosphate. The polypeptide is Carbamoyl phosphate synthase large chain (Bifidobacterium longum (strain DJO10A)).